Consider the following 185-residue polypeptide: Ribosome-recycling factor (185 aa).

The protein belongs to the RRF family.

The protein resides in the cytoplasm. In terms of biological role, responsible for the release of ribosomes from messenger RNA at the termination of protein biosynthesis. May increase the efficiency of translation by recycling ribosomes from one round of translation to another. The sequence is that of Ribosome-recycling factor from Saccharophagus degradans (strain 2-40 / ATCC 43961 / DSM 17024).